The chain runs to 211 residues: Imidazole glycerol phosphate synthase subunit HisH (211 aa).

A Glutamine amidotransferase type-1 domain is found at Arg4–Leu211. Cys82 functions as the Nucleophile in the catalytic mechanism. Active-site residues include His192 and Glu194.

As to quaternary structure, heterodimer of HisH and HisF.

It is found in the cytoplasm. The catalysed reaction is 5-[(5-phospho-1-deoxy-D-ribulos-1-ylimino)methylamino]-1-(5-phospho-beta-D-ribosyl)imidazole-4-carboxamide + L-glutamine = D-erythro-1-(imidazol-4-yl)glycerol 3-phosphate + 5-amino-1-(5-phospho-beta-D-ribosyl)imidazole-4-carboxamide + L-glutamate + H(+). It catalyses the reaction L-glutamine + H2O = L-glutamate + NH4(+). It participates in amino-acid biosynthesis; L-histidine biosynthesis; L-histidine from 5-phospho-alpha-D-ribose 1-diphosphate: step 5/9. IGPS catalyzes the conversion of PRFAR and glutamine to IGP, AICAR and glutamate. The HisH subunit catalyzes the hydrolysis of glutamine to glutamate and ammonia as part of the synthesis of IGP and AICAR. The resulting ammonia molecule is channeled to the active site of HisF. In Thermobifida fusca (strain YX), this protein is Imidazole glycerol phosphate synthase subunit HisH.